The sequence spans 706 residues: Elongation factor G (706 aa).

Residues 15–291 enclose the tr-type G domain; that stretch reads LKTRNIGISA…GVLDYLASPV (277 aa). GTP-binding positions include 24-31, 91-95, and 145-148; these read AHIDSGKT, DTPGH, and NKLD.

It belongs to the TRAFAC class translation factor GTPase superfamily. Classic translation factor GTPase family. EF-G/EF-2 subfamily.

It localises to the cytoplasm. Catalyzes the GTP-dependent ribosomal translocation step during translation elongation. During this step, the ribosome changes from the pre-translocational (PRE) to the post-translocational (POST) state as the newly formed A-site-bound peptidyl-tRNA and P-site-bound deacylated tRNA move to the P and E sites, respectively. Catalyzes the coordinated movement of the two tRNA molecules, the mRNA and conformational changes in the ribosome. This chain is Elongation factor G, found in Leptospira borgpetersenii serovar Hardjo-bovis (strain JB197).